We begin with the raw amino-acid sequence, 259 residues long: Adenosylcobinamide-GDP ribazoletransferase (259 aa).

Helical transmembrane passes span 41-61 (AAIW…AIVF), 67-87 (FGLA…IATG), 119-139 (IGAY…NVLS), 148-168 (LFAL…FMHL), 179-199 (AGAG…GAIP), 200-220 (LLLL…LLFA), and 237-257 (TIGA…SVAL).

The protein belongs to the CobS family. Mg(2+) is required as a cofactor.

The protein resides in the cell inner membrane. The catalysed reaction is alpha-ribazole + adenosylcob(III)inamide-GDP = adenosylcob(III)alamin + GMP + H(+). The enzyme catalyses alpha-ribazole 5'-phosphate + adenosylcob(III)inamide-GDP = adenosylcob(III)alamin 5'-phosphate + GMP + H(+). It functions in the pathway cofactor biosynthesis; adenosylcobalamin biosynthesis; adenosylcobalamin from cob(II)yrinate a,c-diamide: step 7/7. Joins adenosylcobinamide-GDP and alpha-ribazole to generate adenosylcobalamin (Ado-cobalamin). Also synthesizes adenosylcobalamin 5'-phosphate from adenosylcobinamide-GDP and alpha-ribazole 5'-phosphate. This Mesorhizobium japonicum (strain LMG 29417 / CECT 9101 / MAFF 303099) (Mesorhizobium loti (strain MAFF 303099)) protein is Adenosylcobinamide-GDP ribazoletransferase.